The sequence spans 226 residues: Uridylate kinase (226 aa).

ATP is bound at residue 6-10 (KISGK). Gly43 serves as a coordination point for UMP. ATP is bound by residues Gly44 and Arg48. UMP-binding positions include Asp65 and 113-119 (FQPGQST). Residues Thr139, Asn140, Tyr145, and Asp148 each coordinate ATP.

It belongs to the UMP kinase family. In terms of assembly, homohexamer.

The protein resides in the cytoplasm. It carries out the reaction UMP + ATP = UDP + ADP. It functions in the pathway pyrimidine metabolism; CTP biosynthesis via de novo pathway; UDP from UMP (UMPK route): step 1/1. Its activity is regulated as follows. Inhibited by UTP. Functionally, catalyzes the reversible phosphorylation of UMP to UDP. This Saccharolobus islandicus (strain Y.N.15.51 / Yellowstone #2) (Sulfolobus islandicus) protein is Uridylate kinase.